Reading from the N-terminus, the 790-residue chain is Probable copper-transporting ATPase SynA (790 aa).

Residues 1-105 are Cytoplasmic-facing; sequence MPAAIVHSAD…IPPLQQQRLQ (105 aa). The region spanning 14–81 is the HMA domain; it reads TSILVEVEGM…EITGLGFRAQ (68 aa). Residues cysteine 25 and cysteine 28 each contribute to the Cu cation site. A helical transmembrane segment spans residues 106-125; sequence LAIAAFLLIVSSWGHLGHWL. The Extracellular segment spans residues 126 to 134; it reads DHPLPGTDQ. The helical transmembrane segment at 135 to 154 threads the bilayer; sequence LWFHALLAIWALLGPGRSIL. Residues 155–166 lie on the Cytoplasmic side of the membrane; it reads QAGWQGLRCGAP. The helical transmembrane segment at 167 to 189 threads the bilayer; that stretch reads NMNSLVLLGTGSAYLASLVALLW. Over 190 to 193 the chain is Extracellular; it reads PQLG. The chain crosses the membrane as a helical span at residues 194 to 211; it reads WVCFLDEPVMLLGFILLG. The Cytoplasmic segment spans residues 212–357; sequence RTLEEQARFR…RKAPVQRFAD (146 aa). A helical membrane pass occupies residues 358–380; that stretch reads AIAGRFVYGVCAIAALTFGFWAT. Residues 381 to 416 lie on the Extracellular side of the membrane; that stretch reads LGSRWWPQVLQQPLPGLLIHAPHHGMEMAHPHSHSP. A helical membrane pass occupies residues 417-439; sequence LLLALTLAISVLVVACPCALGLA. At 440-726 the chain is on the cytoplasmic side; sequence TPTAILVATG…QMGLRTIRQN (287 aa). The active-site 4-aspartylphosphate intermediate is the aspartate 476. Mg(2+)-binding residues include aspartate 669 and aspartate 673. Residues 727–749 traverse the membrane as a helical segment; sequence LTWALGYNVVMLPLAAGAFLPAY. Residues 750 to 753 lie on the Extracellular side of the membrane; sequence GLAL. The helical transmembrane segment at 754–776 threads the bilayer; it reads TPAIAGACMAVSSLAVVSNSLLL. The Cytoplasmic portion of the chain corresponds to 777-790; it reads RYWFRRSLNHSVSV.

It belongs to the cation transport ATPase (P-type) (TC 3.A.3) family. Type IB subfamily.

Its subcellular location is the cell membrane. It catalyses the reaction Cu(2+)(in) + ATP + H2O = Cu(2+)(out) + ADP + phosphate + H(+). Its function is as follows. Involved in copper transport. The chain is Probable copper-transporting ATPase SynA (synA) from Synechococcus sp. (strain ATCC 27144 / PCC 6301 / SAUG 1402/1) (Anacystis nidulans).